The following is a 245-amino-acid chain: Fibroblast growth factor 3 (245 aa).

A signal peptide spans 1-17 (MGLIWLLLLSLLEPSWP). Asparagine 65 carries an N-linked (GlcNAc...) asparagine glycan. Disordered regions lie at residues 137–181 (GSSG…FLPR) and 195–245 (QSSQ…LAVA). Over residues 161-173 (GRPRRGFKTRRTQ) the composition is skewed to basic residues. The span at 226–238 (TLSTRATPSTQLH) shows a compositional bias: polar residues.

This sequence belongs to the heparin-binding growth factors family. As to quaternary structure, interacts with FGFR1 and FGFR2. Affinity between fibroblast growth factors (FGFs) and their receptors is increased by heparan sulfate glycosaminoglycans that function as coreceptors. In terms of processing, glycosylated.

It is found in the nucleus. The protein localises to the endoplasmic reticulum. It localises to the golgi apparatus. Its function is as follows. Plays an important role in the regulation of embryonic development, cell proliferation, and cell differentiation. Required for normal ear development. The polypeptide is Fibroblast growth factor 3 (Fgf3) (Mus musculus (Mouse)).